The following is a 104-amino-acid chain: SOSS complex subunit C (104 aa).

Ala2 is modified (N-acetylalanine).

This sequence belongs to the SOSS-C family. As to quaternary structure, component of the SOSS complex, composed of SOSS-B (SOSS-B1/NABP2 or SOSS-B2/NABP1), SOSS-A/INTS3 and SOSS-C/INIP. SOSS complexes containing SOSS-B1/NABP2 are more abundant than complexes containing SOSS-B2/NABP1. Interacts with INTS3; the interaction is direct.

Its subcellular location is the nucleus. Functionally, component of the SOSS complex, a multiprotein complex that functions downstream of the MRN complex to promote DNA repair and G2/M checkpoint. The SOSS complex associates with single-stranded DNA at DNA lesions and influences diverse endpoints in the cellular DNA damage response including cell-cycle checkpoint activation, recombinational repair and maintenance of genomic stability. Required for efficient homologous recombination-dependent repair of double-strand breaks (DSBs) and ATM-dependent signaling pathways. This Bos taurus (Bovine) protein is SOSS complex subunit C (INIP).